Here is a 196-residue protein sequence, read N- to C-terminus: Probable GTP-binding protein EngB (196 aa).

The region spanning 22-193 (SLPEVAFVGR…LEEIRKAKGE (172 aa)) is the EngB-type G domain. GTP contacts are provided by residues 30–37 (GRSNVGKS), 57–61 (GRTQL), 75–78 (DLPG), 142–145 (TKSD), and 172–174 (FSA). Positions 37 and 59 each coordinate Mg(2+).

The protein belongs to the TRAFAC class TrmE-Era-EngA-EngB-Septin-like GTPase superfamily. EngB GTPase family. It depends on Mg(2+) as a cofactor.

Necessary for normal cell division and for the maintenance of normal septation. This Syntrophus aciditrophicus (strain SB) protein is Probable GTP-binding protein EngB.